Consider the following 346-residue polypeptide: N-acetyl-gamma-glutamyl-phosphate reductase (346 aa).

Cys151 is an active-site residue.

The protein belongs to the NAGSA dehydrogenase family. Type 1 subfamily.

It localises to the cytoplasm. It catalyses the reaction N-acetyl-L-glutamate 5-semialdehyde + phosphate + NADP(+) = N-acetyl-L-glutamyl 5-phosphate + NADPH + H(+). It functions in the pathway amino-acid biosynthesis; L-arginine biosynthesis; N(2)-acetyl-L-ornithine from L-glutamate: step 3/4. Its function is as follows. Catalyzes the NADPH-dependent reduction of N-acetyl-5-glutamyl phosphate to yield N-acetyl-L-glutamate 5-semialdehyde. The chain is N-acetyl-gamma-glutamyl-phosphate reductase from Ehrlichia canis (strain Jake).